The primary structure comprises 132 residues: Pro-MCH 1 (132 aa).

The signal sequence occupies residues 1–24 (MRHSVLSISFAVALFLECYTPSTA). A disulfide bridge connects residues Cys-120 and Cys-129.

The protein belongs to the melanin-concentrating hormone family. As to expression, pituitary gland. Produced in neurons of lateral basal hypothalamus which project both to the brain and to the neural lobe of the pituitary gland from where MCH is released.

Plays a role in skin pigmentation by antagonizing the action of melanotropin alpha. Induces melanin concentration within the melanophores. May participate in the control of the hypothalamo-pituitary adrenal gland axis by inhibiting the release of ACTH. The chain is Pro-MCH 1 (mch1) from Oncorhynchus mykiss (Rainbow trout).